The primary structure comprises 220 residues: Ribonuclease HII (220 aa).

The 189-residue stretch at Lys32–Cys220 folds into the RNase H type-2 domain. A divalent metal cation-binding residues include Asp38, Glu39, and Asp130.

Belongs to the RNase HII family. Mn(2+) serves as cofactor. The cofactor is Mg(2+).

The protein resides in the cytoplasm. It catalyses the reaction Endonucleolytic cleavage to 5'-phosphomonoester.. Functionally, endonuclease that specifically degrades the RNA of RNA-DNA hybrids. The polypeptide is Ribonuclease HII (Brucella abortus (strain 2308)).